The following is a 311-amino-acid chain: R2-like ligand binding oxidase (311 aa).

The Mn(2+) site is built by glutamate 68, glutamate 101, and histidine 104. Positions 71 to 162 form a cross-link, 3-(O4'-tyrosyl)-valine (Val-Tyr); the sequence is VTQDIQPFMA…AAQVRASVTY (92 aa). Glutamate 101 provides a ligand contact to Fe cation. Residues glutamate 167, glutamate 202, and histidine 205 each coordinate Fe cation.

This sequence belongs to the ribonucleoside diphosphate reductase small chain family. R2-like ligand binding oxidase subfamily. Homodimer. It depends on Fe cation as a cofactor. Requires Mn(2+) as cofactor.

Probable oxidase that might be involved in lipid metabolism. The polypeptide is R2-like ligand binding oxidase (Mycobacterium avium (strain 104)).